The sequence spans 295 residues: Proline iminopeptidase (295 aa).

The region spanning proline 29 to glutamate 279 is the AB hydrolase-1 domain. Residue serine 107 is the Nucleophile of the active site. The active site involves aspartate 246. Histidine 273 functions as the Proton donor in the catalytic mechanism.

Belongs to the peptidase S33 family.

It is found in the cell envelope. The enzyme catalyses Release of N-terminal proline from a peptide.. In terms of biological role, releases the N-terminal proline from various substrates. This is Proline iminopeptidase from Lactobacillus delbrueckii subsp. bulgaricus (strain ATCC 11842 / DSM 20081 / BCRC 10696 / JCM 1002 / NBRC 13953 / NCIMB 11778 / NCTC 12712 / WDCM 00102 / Lb 14).